The sequence spans 281 residues: Elongation factor Ts (281 aa).

The interval 80-83 (TDFV) is involved in Mg(2+) ion dislocation from EF-Tu.

Belongs to the EF-Ts family.

It is found in the cytoplasm. Associates with the EF-Tu.GDP complex and induces the exchange of GDP to GTP. It remains bound to the aminoacyl-tRNA.EF-Tu.GTP complex up to the GTP hydrolysis stage on the ribosome. The protein is Elongation factor Ts of Aliivibrio fischeri (strain MJ11) (Vibrio fischeri).